Reading from the N-terminus, the 215-residue chain is Eukaryotic translation initiation factor 4E-1A (215 aa).

Residues Met-1 to Asn-14 are compositionally biased toward low complexity. A disordered region spans residues Met-1–Glu-23. Residues Trp-54–Gln-55, Trp-100–Glu-101, Arg-155–Lys-160, and Thr-203–Ser-205 each bind mRNA.

It belongs to the eukaryotic initiation factor 4E family. In terms of assembly, interacts with eif4ebp3l. As to expression, expressed in all tissues examined, including gill, fin, heart, intestine, muscle, ovary and testis.

It localises to the cytoplasm. The protein localises to the nucleus. Functionally, recognizes and binds the 7-methylguanosine (m7G)-containing mRNA cap during an early step in the initiation of protein synthesis and facilitates ribosome binding by inducing the unwinding of the mRNAs secondary structures. Also promotes export of a subset of mRNAs from the nucleus to the cytoplasm. This Danio rerio (Zebrafish) protein is Eukaryotic translation initiation factor 4E-1A.